We begin with the raw amino-acid sequence, 216 residues long: Homeobox-leucine zipper protein ATHB-40 (216 aa).

The segment at 28–52 (GEVKQPKRRRKKTKGSVASADGGNG) is disordered. The segment at residues 52-111 (GLFRKRKLTDEQVNMLEMSFGDEHKLESERKDRLAAELGLDPRQVAVWFQNRRARWKNKR) is a DNA-binding region (homeobox). The segment at 112 to 140 (LEEEYNKLKNSHDNVVVDKCRLESEVIQL) is leucine-zipper.

It belongs to the HD-ZIP homeobox family. Class I subfamily. As to expression, expressed in roots, flowers and siliques.

The protein resides in the nucleus. Its function is as follows. Probable transcription factor. This is Homeobox-leucine zipper protein ATHB-40 (ATHB-40) from Arabidopsis thaliana (Mouse-ear cress).